The following is a 913-amino-acid chain: DNA mismatch repair protein MutS (913 aa).

Gly720–Ser727 serves as a coordination point for ATP.

The protein belongs to the DNA mismatch repair MutS family.

Its function is as follows. This protein is involved in the repair of mismatches in DNA. It is possible that it carries out the mismatch recognition step. This protein has a weak ATPase activity. The polypeptide is DNA mismatch repair protein MutS (Prochlorococcus marinus (strain AS9601)).